The chain runs to 239 residues: Orotidine 5'-phosphate decarboxylase (239 aa).

Substrate contacts are provided by residues aspartate 15, lysine 37, 64–73, threonine 126, arginine 187, glutamine 196, glycine 216, and arginine 217; that span reads DLKFHDIPNT. Lysine 66 serves as the catalytic Proton donor.

This sequence belongs to the OMP decarboxylase family. Type 1 subfamily. In terms of assembly, homodimer.

The enzyme catalyses orotidine 5'-phosphate + H(+) = UMP + CO2. It participates in pyrimidine metabolism; UMP biosynthesis via de novo pathway; UMP from orotate: step 2/2. Its function is as follows. Catalyzes the decarboxylation of orotidine 5'-monophosphate (OMP) to uridine 5'-monophosphate (UMP). The protein is Orotidine 5'-phosphate decarboxylase of Geobacter metallireducens (strain ATCC 53774 / DSM 7210 / GS-15).